The following is a 122-amino-acid chain: Large ribosomal subunit protein bL12 (122 aa).

Belongs to the bacterial ribosomal protein bL12 family. As to quaternary structure, homodimer. Part of the ribosomal stalk of the 50S ribosomal subunit. Forms a multimeric L10(L12)X complex, where L10 forms an elongated spine to which 2 to 4 L12 dimers bind in a sequential fashion. Binds GTP-bound translation factors.

Functionally, forms part of the ribosomal stalk which helps the ribosome interact with GTP-bound translation factors. Is thus essential for accurate translation. The chain is Large ribosomal subunit protein bL12 from Xylella fastidiosa (strain 9a5c).